Consider the following 182-residue polypeptide: SAGA-associated factor 11 homolog (182 aa).

A disordered region spans residues 61–84; it reads GSGAAVEGEPEDSKPYTIVDQPDT. The SGF11-type zinc-finger motif lies at 98 to 119; that stretch reads CHCPNCNRIVAASRFAPHLEKC. The disordered stretch occupies residues 133-182; sequence RIANTRDVGTGNYFGGDEDDEDDADWSGEKRKKKISQVRTNGSKKNGKTS. A compositionally biased stretch (acidic residues) spans 148-158; it reads GDEDDEDDADW.

This sequence belongs to the SGF11 family. As to quaternary structure, component of some SAGA transcription coactivator-HAT complexes. Within the SAGA complex, participates in a subcomplex of SAGA called the DUB module (deubiquitination module).

It is found in the nucleus. Component of the transcription regulatory histone acetylation (HAT) complex SAGA, a multiprotein complex that activates transcription by remodeling chromatin and mediating histone acetylation and deubiquitination. Within the SAGA complex, participates in a subcomplex that specifically deubiquitinates histone H2B. The SAGA complex is recruited to specific gene promoters by activators, where it is required for transcription. The polypeptide is SAGA-associated factor 11 homolog (Anopheles gambiae (African malaria mosquito)).